A 130-amino-acid polypeptide reads, in one-letter code: Small ribosomal subunit protein uS8 (130 aa).

This sequence belongs to the universal ribosomal protein uS8 family. In terms of assembly, part of the 30S ribosomal subunit. Contacts proteins S5 and S12.

In terms of biological role, one of the primary rRNA binding proteins, it binds directly to 16S rRNA central domain where it helps coordinate assembly of the platform of the 30S subunit. The chain is Small ribosomal subunit protein uS8 from Aliivibrio fischeri (strain MJ11) (Vibrio fischeri).